Consider the following 147-residue polypeptide: Small ribosomal subunit protein bS16m (147 aa).

It belongs to the bacterial ribosomal protein bS16 family. In terms of assembly, component of the mitochondrial ribosome small subunit (28S) which comprises a 12S rRNA and about 30 distinct proteins.

It is found in the mitochondrion. The protein is Small ribosomal subunit protein bS16m (mrps-16) of Caenorhabditis elegans.